We begin with the raw amino-acid sequence, 656 residues long: Pyoverdine export ATP-binding/permease protein PvdT (656 aa).

Residues Ile-6 to Val-245 form the ABC transporter domain. Position 43 to 50 (Gly-43 to Ser-50) interacts with ATP. 4 helical membrane passes run Ala-284–Gly-304, Ile-538–Val-558, Leu-589–Leu-609, and Val-619–Met-639.

This sequence belongs to the ABC transporter superfamily. Macrolide exporter (TC 3.A.1.122) family. Part of the tripartite efflux system PvdRT-OpmQ, which is composed of an inner membrane component with both ATPase and permease domains, PvdT, a periplasmic membrane fusion protein, PvdR, and an outer membrane component, OpmQ.

The protein localises to the cell inner membrane. Part of the tripartite efflux system PvdRT-OpmQ required for the secretion into the extracellular milieu of the siderophore pyoverdine (PVD), which is involved in iron acquisition. This subunit binds PVD and drives its secretion by hydrolyzing ATP. The system is responsible for export of newly synthesized PVD after the final steps of biosynthesis have taken place in the periplasm. It is also responsible for recycling of PVD after internalization of ferri-PVD into the periplasm by the outer-membrane receptor FpvA and release of iron from PVD, thus making PVD available for new cycles of iron uptake. In Pseudomonas savastanoi pv. phaseolicola (strain 1448A / Race 6) (Pseudomonas syringae pv. phaseolicola (strain 1448A / Race 6)), this protein is Pyoverdine export ATP-binding/permease protein PvdT.